Consider the following 335-residue polypeptide: Thioredoxin-related transmembrane protein 4 (335 aa).

The N-terminal stretch at methionine 1 to alanine 20 is a signal peptide. Positions alanine 26–glutamate 133 constitute a Thioredoxin domain. Residues cysteine 60 and cysteine 63 each act as nucleophile in the active site. Cysteines 60 and 63 form a disulfide. The chain crosses the membrane as a helical span at residues valine 186–isoleucine 206. Positions cysteine 222–glutamine 316 are disordered. Over residues glutamine 238–asparagine 280 the composition is skewed to acidic residues. Phosphoserine occurs at positions 247 and 255. A compositionally biased stretch (basic and acidic residues) spans alanine 286–valine 298.

Its subcellular location is the nucleus inner membrane. It localises to the endoplasmic reticulum membrane. This chain is Thioredoxin-related transmembrane protein 4 (Tmx4), found in Mus musculus (Mouse).